A 383-amino-acid chain; its full sequence is MATTSATSTVNTSSLATTMTTNFTSLLTSVVTTIASLVPSTNSSEDYYDDLDDVDYEESAPCYKSDTTRLAAQVVPALYLLVFLFGLLGNILVVIIVIRYMKIKNLTNMLLLNLAISDLLFLLTLPFWMHYIGMYHDWTFGISLCKLLRGVCYMSLYSQVFCIILLTVDRYLAVVYAVTALRFRTVTCGIVTCVCTWFLAGLLSLPEFFFHGHQDDNGRVQCDPYYPEMSTNVWRRAHVAKVIMLSLILPLLIMAVCYYVIIRRLLRRPSKKKYKAIRLIFVIMVAYFVFWTPYNIVLLLSTFHATLLNLQCALSSNLDMALLITKTVAYTHCCINPVIYAFVGEKFRRHLYHFFHTYVAIYLCKYIPFLSGDGEGKEGPTRI.

Transmembrane regions (helical) follow at residues 13–35 (SSLA…TTIA), 78–98 (LYLL…IIVI), 109–129 (MLLL…PFWM), 160–180 (VFCI…AVTA), 190–210 (IVTC…EFFF), 242–262 (VIML…YVII), 279–299 (LIFV…IVLL), 323–343 (LITK…YAFV), and 351–371 (LYHF…PFLS). A disulfide bridge links cysteine 145 with cysteine 222.

The protein belongs to the G-protein coupled receptor 1 family.

The protein localises to the host membrane. The chain is G-protein coupled receptor E1 (E1) from Equine herpesvirus 2 (strain 86/87) (EHV-2).